The chain runs to 467 residues: Dihydrolipoyl dehydrogenase (467 aa).

FAD is bound by residues 33-41 (EPKYWGGIC), K50, and G113. Residues C41 and C46 are joined by a disulfide bond. Residues 181–185 (GAGAI), E204, and 269–272 (AIGF) contribute to the NAD(+) site. Residues D312 and A320 each contribute to the FAD site. Residue H446 is the Proton acceptor of the active site.

Belongs to the class-I pyridine nucleotide-disulfide oxidoreductase family. Homodimer. Part of the PDH complex, consisting of multiple copies of AceE (E1), DlaT (E2) and Lpd (E3), and of the BCKADH complex, consisting of multiple copies of BkdA/BkdB (E1), BkdC (E2) and Lpd (E3). FAD serves as cofactor.

The protein resides in the cytoplasm. It carries out the reaction N(6)-[(R)-dihydrolipoyl]-L-lysyl-[protein] + NAD(+) = N(6)-[(R)-lipoyl]-L-lysyl-[protein] + NADH + H(+). In terms of biological role, lipoamide dehydrogenase is a component of the alpha-ketoacid dehydrogenase complexes. Catalyzes the reoxidation of dihydrolipoyl groups which are covalently attached to the lipoate acyltransferase components (E2) of the complexes. This chain is Dihydrolipoyl dehydrogenase (lpd), found in Mycobacterium leprae (strain TN).